Consider the following 154-residue polypeptide: Large ribosomal subunit protein uL15 (154 aa).

The tract at residues 1 to 54 (MKLHDLTPAPGSRKPKKRVGRGPGGTDKTAGRGHKGQKSRSGAGKGPFFEGGRS) is disordered.

This sequence belongs to the universal ribosomal protein uL15 family. As to quaternary structure, part of the 50S ribosomal subunit.

Binds to the 23S rRNA. The chain is Large ribosomal subunit protein uL15 from Deinococcus geothermalis (strain DSM 11300 / CIP 105573 / AG-3a).